We begin with the raw amino-acid sequence, 196 residues long: MSRRAEVTRNTSETQIRVALDLDGTGKQTLNTGVPFLDHMLDQIARHGMVDLDVSATGDTHIDDHHTVEDVGITLGQAVAKAIGDKKGIVRYGHSYVPLDEALSRVVIDFSGRPGLEFHVPFTRARVGNFDVDLSIEFFRGFVNHAGVTLHIDNLRGVNAHHQIETVFKAFGRALRMAVEIDPRAAGTIPSTKGAL.

Belongs to the imidazoleglycerol-phosphate dehydratase family.

Its subcellular location is the cytoplasm. The enzyme catalyses D-erythro-1-(imidazol-4-yl)glycerol 3-phosphate = 3-(imidazol-4-yl)-2-oxopropyl phosphate + H2O. It participates in amino-acid biosynthesis; L-histidine biosynthesis; L-histidine from 5-phospho-alpha-D-ribose 1-diphosphate: step 6/9. This chain is Imidazoleglycerol-phosphate dehydratase, found in Ralstonia pickettii (strain 12J).